Here is a 204-residue protein sequence, read N- to C-terminus: Thiamine-phosphate synthase (204 aa).

Residues 32 to 36 (QLRMK) and Asp64 contribute to the 4-amino-2-methyl-5-(diphosphooxymethyl)pyrimidine site. Asp65 and Asp84 together coordinate Mg(2+). Residue Thr103 coordinates 4-amino-2-methyl-5-(diphosphooxymethyl)pyrimidine. Position 129-131 (129-131 (TTT)) interacts with 2-[(2R,5Z)-2-carboxy-4-methylthiazol-5(2H)-ylidene]ethyl phosphate. Residue Lys132 coordinates 4-amino-2-methyl-5-(diphosphooxymethyl)pyrimidine. Gly165 contributes to the 2-[(2R,5Z)-2-carboxy-4-methylthiazol-5(2H)-ylidene]ethyl phosphate binding site.

It belongs to the thiamine-phosphate synthase family. Mg(2+) is required as a cofactor.

It catalyses the reaction 2-[(2R,5Z)-2-carboxy-4-methylthiazol-5(2H)-ylidene]ethyl phosphate + 4-amino-2-methyl-5-(diphosphooxymethyl)pyrimidine + 2 H(+) = thiamine phosphate + CO2 + diphosphate. The enzyme catalyses 2-(2-carboxy-4-methylthiazol-5-yl)ethyl phosphate + 4-amino-2-methyl-5-(diphosphooxymethyl)pyrimidine + 2 H(+) = thiamine phosphate + CO2 + diphosphate. The catalysed reaction is 4-methyl-5-(2-phosphooxyethyl)-thiazole + 4-amino-2-methyl-5-(diphosphooxymethyl)pyrimidine + H(+) = thiamine phosphate + diphosphate. It functions in the pathway cofactor biosynthesis; thiamine diphosphate biosynthesis; thiamine phosphate from 4-amino-2-methyl-5-diphosphomethylpyrimidine and 4-methyl-5-(2-phosphoethyl)-thiazole: step 1/1. Condenses 4-methyl-5-(beta-hydroxyethyl)thiazole monophosphate (THZ-P) and 2-methyl-4-amino-5-hydroxymethyl pyrimidine pyrophosphate (HMP-PP) to form thiamine monophosphate (TMP). In Bacteroides fragilis (strain ATCC 25285 / DSM 2151 / CCUG 4856 / JCM 11019 / LMG 10263 / NCTC 9343 / Onslow / VPI 2553 / EN-2), this protein is Thiamine-phosphate synthase.